The sequence spans 434 residues: MRVVILGSGVVGVASAWYLAKDGHDVTVIDRQDGPAQETSAGNAGQISPGYAAPWAAPGVPLKAIKWMFQRHAPLAIHLDGSASQLRWMWQMLRNCDTSHYMINKSRMVRLAEYSRDCLKDLREDTGIQYEGRQGGTLQLFRTEQQFDNAAKDIAVLDDAGVPYSLLTADQLATVEPALAKVAHKLTGGLRLPNDETGDCKLFTERLAKMAEQAGVKFIFNRSVEKLLVDGDQIAGVLWGDDIIKADAYVVAFGAYSTALLAGLVSIPVYPLKGYSLTIPITNPAGAPYSTVLDETYKIAITRFDDRIRVGGMAEIVGFNTQLEQARRETLEMVVGDLYPDGGNISQATFWTGLRPMTPDGTPIVGRTSLKNLYLNTGHGTLGWTMACGSGQLLADIMSGRRPAILADDLSVSRYSADFRPLNVAPLHDAHPIR.

FAD is bound at residue Val3–Trp17.

It belongs to the DadA oxidoreductase family. Requires FAD as cofactor.

It carries out the reaction a D-alpha-amino acid + A + H2O = a 2-oxocarboxylate + AH2 + NH4(+). It functions in the pathway amino-acid degradation; D-alanine degradation; NH(3) and pyruvate from D-alanine: step 1/1. Oxidative deamination of D-amino acids. This chain is D-amino acid dehydrogenase, found in Yersinia enterocolitica serotype O:8 / biotype 1B (strain NCTC 13174 / 8081).